Consider the following 230-residue polypeptide: Ribosomal RNA small subunit methyltransferase G (230 aa).

S-adenosyl-L-methionine-binding positions include Gly74, Phe79, 124–125, and Arg141; that span reads AE.

It belongs to the methyltransferase superfamily. RNA methyltransferase RsmG family.

The protein resides in the cytoplasm. Its function is as follows. Specifically methylates the N7 position of a guanine in 16S rRNA. The chain is Ribosomal RNA small subunit methyltransferase G from Acholeplasma laidlawii (strain PG-8A).